A 241-amino-acid chain; its full sequence is Probable porphobilinogen deaminase (241 aa).

This sequence belongs to the HMBS family.

The enzyme catalyses 4 porphobilinogen + H2O = hydroxymethylbilane + 4 NH4(+). Its pathway is porphyrin-containing compound metabolism; protoporphyrin-IX biosynthesis; coproporphyrinogen-III from 5-aminolevulinate: step 2/4. Its function is as follows. Tetrapolymerization of the monopyrrole PBG into the hydroxymethylbilane pre-uroporphyrinogen in several discrete steps. The protein is Probable porphobilinogen deaminase (hemC) of Chlamydia trachomatis serovar D (strain ATCC VR-885 / DSM 19411 / UW-3/Cx).